We begin with the raw amino-acid sequence, 1806 residues long: Non-reducing polyketide synthase pks12 (1806 aa).

The Starter acyltransferase (SAT) domain maps to 30 to 191 (TDTMSGMISL…TKLHLRGKVH (162 aa)). Positions 330 to 755 (ENAIAIVGAG…GSNSALICGE (426 aa)) constitute a Ketosynthase family 3 (KS3) domain. Catalysis depends on for beta-ketoacyl synthase activity residues Cys-504, His-639, and His-678. The interval 860 to 1156 (LAFSGQSKQT…HNPSQHTFLG (297 aa)) is malonyl-CoA:ACP transacylase (MAT) domain. The 286-residue stretch at 862–1147 (FSGQSKQTIG…IIPMVKRATH (286 aa)) folds into the Malonyl-CoA:ACP transacylase (MAT) domain. The For acyl/malonyl transferase activity role is filled by Ser-947. Residues 1249–1383 (PQTPPLKLVT…GRFSVTSHID (135 aa)) form an N-terminal hotdog fold region. The 310-residue stretch at 1249–1558 (PQTPPLKLVT…FSRFPIAKLE (310 aa)) folds into the PKS/mFAS DH domain. Positions 1249-1558 (PQTPPLKLVT…FSRFPIAKLE (310 aa)) are product template (PT) domain. Catalysis depends on His-1288, which acts as the Proton acceptor; for dehydratase activity. Positions 1404 to 1558 (SERLMAGRAY…FSRFPIAKLE (155 aa)) are C-terminal hotdog fold. Asp-1468 acts as the Proton donor; for dehydratase activity in catalysis. In terms of domain architecture, Carrier spans 1727 to 1804 (QSKLRIRQRI…ELVDYVVISS (78 aa)). Residue Ser-1764 is modified to O-(pantetheine 4'-phosphoryl)serine.

It depends on pantetheine 4'-phosphate as a cofactor.

The protein operates within secondary metabolite biosynthesis. Non-reducing polyketide synthase; part of the gene cluster that mediates the biosynthesis of mitorubrinol and mitorubrinic acid, two virulence factors that improve T.marneffei intracellular survival in macrophages. The two polyketide synthases pks12 and pks11 are probably responsible for sequential use in the biosynthesis of mitorubrinol and mitorubrinic acid. The first part of the biosynthesis is probably catalyzed by pks12, which synthesized orsellinic acid. This tetraketide is then used as a starter unit for pks11, which possesses a SAT domain, in the second part of the biosynthesis. Pks11, contains a methyltransferase domain, also served that methylates the products, using a methyl group from S-adenosylmethionine. This chain is Non-reducing polyketide synthase pks12, found in Talaromyces marneffei (Penicillium marneffei).